Reading from the N-terminus, the 298-residue chain is HTH-type transcriptional regulator ArgP (298 aa).

Residues 4–60 enclose the HTH lysR-type domain; it reads LDYRWIEALDSVVSKGSFERAAEQLFISQSAVSQRIKQLEKYLAQPVLIREQPPRPT. Positions 21 to 40 form a DNA-binding region, H-T-H motif; that stretch reads FERAAEQLFISQSAVSQRIK.

The protein belongs to the LysR transcriptional regulatory family. In terms of assembly, homodimer.

Functionally, controls the transcription of genes involved in arginine and lysine metabolism. This Vibrio cholerae serotype O1 (strain ATCC 39541 / Classical Ogawa 395 / O395) protein is HTH-type transcriptional regulator ArgP.